We begin with the raw amino-acid sequence, 317 residues long: Melanocyte-stimulating hormone receptor (317 aa).

Over Met-1 to Glu-37 the chain is Extracellular. Asn-29 carries an N-linked (GlcNAc...) asparagine glycan. Residues Val-38–Ile-63 form a helical membrane-spanning segment. Residues Ala-64–Pro-72 lie on the Cytoplasmic side of the membrane. Residues Met-73 to Leu-93 traverse the membrane as a helical segment. Over Glu-94 to Asn-118 the chain is Extracellular. The chain crosses the membrane as a helical span at residues Thr-119 to Leu-140. The Cytoplasmic portion of the chain corresponds to Asp-141–Arg-163. Residues Ala-164–Cys-183 form a helical membrane-spanning segment. The Extracellular portion of the chain corresponds to Asp-184–Cys-191. A helical transmembrane segment spans residues Leu-192–Leu-211. Topologically, residues Ala-212–Ala-240 are cytoplasmic. A helical membrane pass occupies residues Ala-241–Leu-266. Over Cys-267 to Asn-279 the chain is Extracellular. A helical membrane pass occupies residues Phe-280–Phe-300. The Cytoplasmic portion of the chain corresponds to Arg-301–Trp-317. A lipid anchor (S-palmitoyl cysteine) is attached at Cys-315.

Belongs to the G-protein coupled receptor 1 family. In terms of assembly, interacts with MGRN1, but does not undergo MGRN1-mediated ubiquitination; this interaction competes with GNAS-binding and thus inhibits agonist-induced cAMP production. Interacts with OPN3; the interaction results in a decrease in MC1R-mediated cAMP signaling and ultimately a decrease in melanin production in melanocytes.

The protein resides in the cell membrane. Functionally, receptor for MSH (alpha, beta and gamma) and ACTH. The activity of this receptor is mediated by G proteins which activate adenylate cyclase. Mediates melanogenesis, the production of eumelanin (black/brown) and phaeomelanin (red/yellow), via regulation of cAMP signaling in melanocytes. This Alouatta seniculus (Red howler monkey) protein is Melanocyte-stimulating hormone receptor (MC1R).